Consider the following 436-residue polypeptide: Mannitol-binding protein (436 aa).

Residues 1 to 22 form the signal peptide; the sequence is MNDSIKACLAAACLALPLLAQG.

Belongs to the bacterial solute-binding protein 1 family.

It localises to the periplasm. Binds mannitol with high affinity. In Pseudomonas aeruginosa (strain ATCC 15692 / DSM 22644 / CIP 104116 / JCM 14847 / LMG 12228 / 1C / PRS 101 / PAO1), this protein is Mannitol-binding protein.